The chain runs to 708 residues: Protein psiF (708 aa).

An N-terminal signal peptide occupies residues 1 to 19; that stretch reads MKYLFIAIILILYCSFTKA. The Extracellular segment spans residues 20–643; sequence DQKKFLVNMY…QSTAVKVGVG (624 aa). 8 N-linked (GlcNAc...) asparagine glycosylation sites follow: N78, N116, N222, N317, N318, N371, N498, and N600. Positions 103-263 constitute a PA14 domain; the sequence is TQTAGSQNYY…YDYCGICNGK (161 aa). The helical transmembrane segment at 644–664 threads the bilayer; the sequence is IGAAAAAGIAIGGAVAAGLAI. The Cytoplasmic segment spans residues 665–708; that stretch reads FGGKKAYDTWKTSRGNVMTGSQSNPLYTQNQNNGNNPLYSAPAE. Residues 682-702 are compositionally biased toward polar residues; sequence MTGSQSNPLYTQNQNNGNNPL. The segment at 682–708 is disordered; it reads MTGSQSNPLYTQNQNNGNNPLYSAPAE.

It belongs to the prespore-cell-inducing factor family. In terms of assembly, forms a complex with dicB.

It is found in the membrane. The protein localises to the secreted. In terms of biological role, acts as a quorum sensing protein regulating discoidin gene expression during growth and development. D.discoideum is a single-celled amoebae and switches to multicellular development when food becomes limited. As the growing cells reach a high density, they begin expressing discoidin genes. The ability of psiF/dicA to induce discoidin gene expression when present in conditioned medium, suggests that it allows cells to sense their local density. The protein is Protein psiF (psiF) of Dictyostelium discoideum (Social amoeba).